Here is a 306-residue protein sequence, read N- to C-terminus: D-aminoacyl-tRNA deacylase (306 aa).

It belongs to the DtdA deacylase family. Monomer. It depends on Zn(2+) as a cofactor.

It carries out the reaction a D-aminoacyl-tRNA + H2O = a tRNA + a D-alpha-amino acid + H(+). The catalysed reaction is glycyl-tRNA(Ala) + H2O = tRNA(Ala) + glycine + H(+). Its function is as follows. D-aminoacyl-tRNA deacylase with broad substrate specificity. By recycling D-aminoacyl-tRNA to D-amino acids and free tRNA molecules, this enzyme counteracts the toxicity associated with the formation of D-aminoacyl-tRNA entities in vivo. In Methanosarcina barkeri (strain Fusaro / DSM 804), this protein is D-aminoacyl-tRNA deacylase.